Here is a 255-residue protein sequence, read N- to C-terminus: Carboxy-S-adenosyl-L-methionine synthase (255 aa).

S-adenosyl-L-methionine is bound by residues Y45, 70–72, 124–125, and N139; these read GCS and DI.

This sequence belongs to the class I-like SAM-binding methyltransferase superfamily. Cx-SAM synthase family. Homodimer.

The catalysed reaction is prephenate + S-adenosyl-L-methionine = carboxy-S-adenosyl-L-methionine + 3-phenylpyruvate + H2O. Catalyzes the conversion of S-adenosyl-L-methionine (SAM) to carboxy-S-adenosyl-L-methionine (Cx-SAM). The protein is Carboxy-S-adenosyl-L-methionine synthase of Hamiltonella defensa subsp. Acyrthosiphon pisum (strain 5AT).